A 34-amino-acid chain; its full sequence is Photosystem II reaction center protein Y (34 aa).

At 1–5 (DWRVL) the chain is on the lumenal side. Residues 6–22 (VVLLPVLLAAGWAVRNI) traverse the membrane as a helical segment. Residues 23 to 34 (LPYAVKQVQKLL) lie on the Cytoplasmic side of the membrane.

It belongs to the PsbY family. PSII is composed of 1 copy each of membrane proteins PsbA, PsbB, PsbC, PsbD, PsbE, PsbF, PsbH, PsbI, PsbJ, PsbK, PsbL, PsbM, PsbT, PsbX, PsbY, PsbZ, Psb30/Ycf12, peripheral proteins PsbO, CyanoQ (PsbQ), PsbU, PsbV and a large number of cofactors. It forms dimeric complexes. This protein is only loosely associated with PSII, and is not often found in crystals. It depends on PSII binds multiple chlorophylls, carotenoids and specific lipids. as a cofactor.

It localises to the cellular thylakoid membrane. Its function is as follows. Loosely associated component of the core of photosystem II (PSII). PSII is a light-driven water plastoquinone oxidoreductase, using light energy to abstract electrons from H(2)O, generating a proton gradient subsequently used for ATP formation. This Thermostichus vulcanus (Synechococcus vulcanus) protein is Photosystem II reaction center protein Y.